A 403-amino-acid chain; its full sequence is Poly(rC)-binding protein 4 (403 aa).

3 KH domains span residues 17 to 67 (TLTL…TITG), 101 to 154 (PVTL…TVSG), and 241 to 293 (TSSQ…TITG).

It localises to the cytoplasm. Single-stranded nucleic acid binding protein that binds preferentially to oligo dC. The polypeptide is Poly(rC)-binding protein 4 (PCBP4) (Bos taurus (Bovine)).